A 92-amino-acid polypeptide reads, in one-letter code: Signal recognition particle 19 kDa protein (92 aa).

It belongs to the SRP19 family. As to quaternary structure, part of the signal recognition particle protein translocation system, which is composed of SRP and FtsY. Archaeal SRP consists of a 7S RNA molecule of 300 nucleotides and two protein subunits: SRP54 and SRP19.

The protein resides in the cytoplasm. In terms of biological role, involved in targeting and insertion of nascent membrane proteins into the cytoplasmic membrane. Binds directly to 7S RNA and mediates binding of the 54 kDa subunit of the SRP. This Haloferax volcanii (strain ATCC 29605 / DSM 3757 / JCM 8879 / NBRC 14742 / NCIMB 2012 / VKM B-1768 / DS2) (Halobacterium volcanii) protein is Signal recognition particle 19 kDa protein.